Here is a 411-residue protein sequence, read N- to C-terminus: Glycogen synthase kinase-3 homolog MsK-3 (411 aa).

In terms of domain architecture, Protein kinase spans Tyr-74–Tyr-358. ATP contacts are provided by residues Val-80–Val-88 and Lys-103. Asp-199 functions as the Proton acceptor in the catalytic mechanism. Residue Tyr-234 is modified to Phosphotyrosine.

It belongs to the protein kinase superfamily. CMGC Ser/Thr protein kinase family. GSK-3 subfamily. As to expression, absent in leaves and petioles, very low levels are seen in the stems and roots while a moderate expression is seen in the nodes.

It carries out the reaction L-seryl-[protein] + ATP = O-phospho-L-seryl-[protein] + ADP + H(+). The catalysed reaction is L-threonyl-[protein] + ATP = O-phospho-L-threonyl-[protein] + ADP + H(+). The protein is Glycogen synthase kinase-3 homolog MsK-3 (MSK-3) of Medicago sativa (Alfalfa).